Reading from the N-terminus, the 571-residue chain is Dihydroxy-acid dehydratase (571 aa).

Residue Cys-56 coordinates [2Fe-2S] cluster. Asp-88 serves as a coordination point for Mg(2+). Cys-129 is a binding site for [2Fe-2S] cluster. Residues Asp-130 and Lys-131 each contribute to the Mg(2+) site. The residue at position 131 (Lys-131) is an N6-carboxylysine. A [2Fe-2S] cluster-binding site is contributed by Cys-201. Glu-452 is a binding site for Mg(2+). Catalysis depends on Ser-478, which acts as the Proton acceptor.

Belongs to the IlvD/Edd family. In terms of assembly, homodimer. It depends on [2Fe-2S] cluster as a cofactor. Requires Mg(2+) as cofactor.

The enzyme catalyses (2R)-2,3-dihydroxy-3-methylbutanoate = 3-methyl-2-oxobutanoate + H2O. It carries out the reaction (2R,3R)-2,3-dihydroxy-3-methylpentanoate = (S)-3-methyl-2-oxopentanoate + H2O. It participates in amino-acid biosynthesis; L-isoleucine biosynthesis; L-isoleucine from 2-oxobutanoate: step 3/4. It functions in the pathway amino-acid biosynthesis; L-valine biosynthesis; L-valine from pyruvate: step 3/4. Functions in the biosynthesis of branched-chain amino acids. Catalyzes the dehydration of (2R,3R)-2,3-dihydroxy-3-methylpentanoate (2,3-dihydroxy-3-methylvalerate) into 2-oxo-3-methylpentanoate (2-oxo-3-methylvalerate) and of (2R)-2,3-dihydroxy-3-methylbutanoate (2,3-dihydroxyisovalerate) into 2-oxo-3-methylbutanoate (2-oxoisovalerate), the penultimate precursor to L-isoleucine and L-valine, respectively. This is Dihydroxy-acid dehydratase from Streptococcus mutans serotype c (strain ATCC 700610 / UA159).